The chain runs to 237 residues: Eukaryotic translation initiation factor 3 subunit K (237 aa).

A PCI domain is found at 44–219; that stretch reads CDCNANRALL…EARKAEIRED (176 aa).

It belongs to the eIF-3 subunit K family. In terms of assembly, component of the eukaryotic translation initiation factor 3 (eIF-3) complex.

The protein resides in the cytoplasm. In terms of biological role, component of the eukaryotic translation initiation factor 3 (eIF-3) complex, which is involved in protein synthesis of a specialized repertoire of mRNAs and, together with other initiation factors, stimulates binding of mRNA and methionyl-tRNAi to the 40S ribosome. The eIF-3 complex specifically targets and initiates translation of a subset of mRNAs involved in cell proliferation. In Neurospora crassa (strain ATCC 24698 / 74-OR23-1A / CBS 708.71 / DSM 1257 / FGSC 987), this protein is Eukaryotic translation initiation factor 3 subunit K.